The chain runs to 177 residues: Probasin (177 aa).

Residues 1–17 form the signal peptide; that stretch reads MRVILLLLTLDVLGVSS. Residues C79 and C170 are joined by a disulfide bond.

Belongs to the calycin superfamily. Lipocalin family. Prostatic epithelial cells.

The protein localises to the nucleus. The protein resides in the secreted. The protein is Probasin (Pbsn) of Rattus norvegicus (Rat).